The following is a 143-amino-acid chain: Endoribonuclease YbeY (143 aa).

Zn(2+) is bound by residues H109, H113, and H119.

The protein belongs to the endoribonuclease YbeY family. It depends on Zn(2+) as a cofactor.

Its subcellular location is the cytoplasm. In terms of biological role, single strand-specific metallo-endoribonuclease involved in late-stage 70S ribosome quality control and in maturation of the 3' terminus of the 16S rRNA. The chain is Endoribonuclease YbeY from Carboxydothermus hydrogenoformans (strain ATCC BAA-161 / DSM 6008 / Z-2901).